The sequence spans 219 residues: MMNRLFGKPKQEANALQTLDKLNETLEMLEKKEKVLLKKAGAEVEKAKEYSRAKNKRAAIQCLKRKRLYEGQVEQLGNFQLRIHDQMIMLEGAKATTETVDALRSGASAMKAMQKATNIDDVDKTMDEINEQTENMKQIQEALATPMGAAADFDEDELAAELDELESEELESQLLQPATTAPPLPSVPVPAGRQPARPVPQKRTAEEEELAALQAEMAL.

Coiled-coil stretches lie at residues 10 to 41 (KQEA…KKAG) and 117 to 176 (TNID…QLLQ). Residues 168-219 (EELESQLLQPATTAPPLPSVPVPAGRQPARPVPQKRTAEEEELAALQAEMAL) are disordered.

This sequence belongs to the SNF7 family. Component of the endosomal sorting required for transport complex III (ESCRT-III), composed at least of VPS2, VPS20, VPS24 and VPS32. Interacts with SKD1. Interacts with BRO1/ALIX.

It localises to the endosome. Functionally, component of the ESCRT-III complex, which is required for multivesicular bodies (MVBs) formation and sorting of endosomal cargo proteins into MVBs. The ESCRT-III complex is probably involved in the concentration of MVB cargo. The protein is Vacuolar protein sorting-associated protein 32 homolog 2 (VPS32.2) of Arabidopsis thaliana (Mouse-ear cress).